The primary structure comprises 108 residues: Small ribosomal subunit protein uS10 (108 aa).

The protein belongs to the universal ribosomal protein uS10 family. In terms of assembly, part of the 30S ribosomal subunit.

In terms of biological role, involved in the binding of tRNA to the ribosomes. This is Small ribosomal subunit protein uS10 from Ehrlichia chaffeensis (strain ATCC CRL-10679 / Arkansas).